Consider the following 744-residue polypeptide: Tripartite motif-containing protein 3 (744 aa).

Ala-2 is modified (N-acetylalanine). An interaction with KIF21B region spans residues 2–290; sequence AKREDSPGPE…LAAQAFPERP (289 aa). Residue Ser-7 is modified to Phosphoserine. The RING-type zinc-finger motif lies at 22 to 63; that stretch reads CSICLDRYRCPKVLPCLHTFCERCLQNYIPPQSLTLSCPVCR. The B box-type zinc-finger motif lies at 110-151; the sequence is GRPLSCPNHEGKTMEFYCEACETAMCGECRAGEHREHGTVLL. Zn(2+)-binding residues include Cys-115, His-118, Cys-138, and His-143. Residues 153-224 adopt a coiled-coil conformation; sequence DVVEQHKAAL…RKQALVSDLE (72 aa). The stretch at 317 to 418 is one Filamin repeat; it reads TTSATAHETV…VRGSPFRVRA (102 aa). The tract at residues 419 to 464 is disordered; it reads LRPGDLPPSPDDVKRRVKSPGGPGSHVRQKAVRRPSSMYSTGGKRK. The residue at position 427 (Ser-427) is a Phosphoserine. 6 NHL repeats span residues 473-516, 520-563, 564-605, 609-652, 656-699, and 700-743; these read VFRV…FSNE, KFRF…FSPE, GKFK…FQPN, VGRF…YSAD, LFKF…FDSS, and GSFL…YRYL.

The protein belongs to the TRIM/RBCC family. In terms of assembly, forms homooligomers. Interacts with TRIM2; this interaction reduces TRIM2 activity. Associates with myosin-Vb (MYO5B) and alpha-actinin-4 (ACTN4). Component of the CART complex, at least composed of ACTN4, HGS/HRS, MYO5B and TRIM3. Interacts with ZFYVE28/LST2. Interacts with KIF21B.

The protein localises to the cytoplasm. It is found in the early endosome. Its subcellular location is the golgi apparatus. The protein resides in the trans-Golgi network. It localises to the cell projection. The protein localises to the dendrite. The catalysed reaction is S-ubiquitinyl-[E2 ubiquitin-conjugating enzyme]-L-cysteine + [acceptor protein]-L-lysine = [E2 ubiquitin-conjugating enzyme]-L-cysteine + N(6)-ubiquitinyl-[acceptor protein]-L-lysine.. Functionally, E3 ubiquitin ligase that plays essential roles in neuronal functions such as regulation of neuronal plasticity, learning, and memory. In addition to its neuronal functions, participates in other biological processes such as innate immunity or cell cycle regulation. Component of the cytoskeleton-associated recycling or transport complex in neurons, polyubiquitinates gamma-actin, thus regulating neuronal plasticity, learning, and memory. Ubiquitinates postsynaptic scaffold GKAP, a neuronal substrate involved in synaptic remodeling and thereby modulates dendritic spine morphology. Positively regulates motility of microtubule-dependent motor protein KIF21B. Induces growth arrest via its RING-dependent E3 ligase activity and ubiquinates CDKN1A. Positively regulates TLR3-mediated signaling by mediating 'Lys-63'-linked polyubiquitination of TLR3. In turn, promotes the recognition and sorting of polyubiquitinated TLR3 by the ESCRT complexes. The sequence is that of Tripartite motif-containing protein 3 (Trim3) from Mus musculus (Mouse).